The primary structure comprises 400 residues: E3 ubiquitin-protein ligase RNF149 (400 aa).

Positions 1-32 (MAWRRREASVGARGVLALALLALALCVPGARG) are cleaved as a signal peptide. N-linked (GlcNAc...) asparagine glycans are attached at residues asparagine 52 and asparagine 145. The PA domain maps to 67-175 (SSPKEGAHGL…PKGREILELV (109 aa)). A helical membrane pass occupies residues 201–221 (VVFVAIAFITMMIISLAWLIF). Residues 269-310 (CAVCIENFKVKDIIRILPCKHIFHRICIDPWLLDHRTCPMCK) form an RING-type; atypical zinc finger. Residues 325–400 (DVQEMPAPES…SDSRHGGPIS (76 aa)) form a disordered region. The residue at position 345 (serine 345) is a Phosphoserine. Low complexity predominate over residues 356-368 (DSSPPSASPAESE). A compositionally biased stretch (basic and acidic residues) spans 389–400 (GRSDSRHGGPIS).

It localises to the membrane. The catalysed reaction is S-ubiquitinyl-[E2 ubiquitin-conjugating enzyme]-L-cysteine + [acceptor protein]-L-lysine = [E2 ubiquitin-conjugating enzyme]-L-cysteine + N(6)-ubiquitinyl-[acceptor protein]-L-lysine.. Its pathway is protein modification; protein ubiquitination. E3 ubiquitin-protein ligase. Ubiquitinates BRAF, inducing its proteasomal degradation. The protein is E3 ubiquitin-protein ligase RNF149 (RNF149) of Homo sapiens (Human).